Here is an 85-residue protein sequence, read N- to C-terminus: Small ribosomal subunit protein uS17 (85 aa).

It belongs to the universal ribosomal protein uS17 family. In terms of assembly, part of the 30S ribosomal subunit.

Its function is as follows. One of the primary rRNA binding proteins, it binds specifically to the 5'-end of 16S ribosomal RNA. This is Small ribosomal subunit protein uS17 from Mycoplasma genitalium (strain ATCC 33530 / DSM 19775 / NCTC 10195 / G37) (Mycoplasmoides genitalium).